Consider the following 768-residue polypeptide: Transferrin receptor protein 1 (768 aa).

At 1-68 (MMDQARSAFS…VAKPKRLNGY (68 aa)) the chain is on the cytoplasmic side. Positions 1 to 70 (MMDQARSAFS…KPKRLNGYVC (70 aa)) are mediates interaction with SH3BP4. Phosphoserine is present on residues Ser-10 and Ser-19. Tyr-20 bears the Phosphotyrosine mark. Positions 20–23 (YTRF) match the Endocytosis signal motif. Thr-21 is subject to Phosphothreonine. Ser-24 bears the Phosphoserine mark. Positions 61–64 (KPKR) match the Stop-transfer sequence motif. A helical transmembrane segment spans residues 69–89 (VCYGIIAVITFFLIGFMIGYL). A lipid anchor (S-palmitoyl cysteine) is attached at Cys-70. The Extracellular portion of the chain corresponds to 90-768 (AYCKRVESKT…GDIWDIDNEF (679 aa)). The PA domain maps to 231–321 (SKATTVTGKL…GTGDPYTPGF (91 aa)). 2 N-linked (GlcNAc...) asparagine glycosylation sites follow: Asn-259 and Asn-325. Residues 577-768 (TMDTYDVLSK…GDIWDIDNEF (192 aa)) form a ligand-binding region. The Cell attachment site signature appears at 654–656 (RGD). N-linked (GlcNAc...) asparagine glycans are attached at residues Asn-730 and Asn-735.

Belongs to the peptidase M28 family. M28B subfamily. In terms of assembly, homodimer; disulfide-linked. Binds one transferrin or HFE molecule per subunit. Interacts with SH3BP4. Interacts with SH3BP3. Interacts with STEAP3; facilitates TFRC endocytosis in erythroid precursor cells. In terms of processing, stearoylated by ZDHHC6 which inhibits TFRC-mediated activation of the JNK pathway and promotes mitochondrial fragmentation. Stearoylation does not affect iron uptake.

The protein resides in the cell membrane. It localises to the melanosome. In terms of biological role, cellular uptake of iron occurs via receptor-mediated endocytosis of ligand-occupied transferrin receptor into specialized endosomes. Endosomal acidification leads to iron release. The apotransferrin-receptor complex is then recycled to the cell surface with a return to neutral pH and the concomitant loss of affinity of apotransferrin for its receptor. Transferrin receptor is necessary for development of erythrocytes and the nervous system. Positively regulates T and B cell proliferation through iron uptake. Acts as a lipid sensor that regulates mitochondrial fusion by regulating activation of the JNK pathway. When dietary levels of stearate (C18:0) are low, promotes activation of the JNK pathway, resulting in HUWE1-mediated ubiquitination and subsequent degradation of the mitofusin MFN2 and inhibition of mitochondrial fusion. When dietary levels of stearate (C18:0) are high, TFRC stearoylation inhibits activation of the JNK pathway and thus degradation of the mitofusin MFN2. Mediates uptake of NICOL1 into fibroblasts where it may regulate extracellular matrix production. The polypeptide is Transferrin receptor protein 1 (TFRC) (Sus scrofa (Pig)).